We begin with the raw amino-acid sequence, 156 residues long: Proline dehydrogenase transcriptional activator (156 aa).

One can recognise an HTH asnC-type domain in the interval 10 to 71 (LDHFDLKILE…VLNPQKLGVD (62 aa)). A DNA-binding region (H-T-H motif) is located at residues 29-48 (VLQLSKRVGLSKTPCQTRLK).

In terms of biological role, transcriptional activator of the putA gene in response to proline. This is Proline dehydrogenase transcriptional activator (putR) from Rhizobium radiobacter (Agrobacterium tumefaciens).